The following is a 161-amino-acid chain: Transcriptional repressor NrdR (161 aa).

Residues 1-11 are compositionally biased toward polar residues; sequence MRCPSCNSLDT. Residues 1-20 form a disordered region; sequence MRCPSCNSLDTQVKDSRPTE. Residues 3–34 fold into a zinc finger; the sequence is CPSCNSLDTQVKDSRPTEDSSVIRRRRVCVTC. The 91-residue stretch at 49 to 139 folds into the ATP-cone domain; that stretch reads LTVIKRNGRR…VYRNFREAKD (91 aa).

Belongs to the NrdR family. Zn(2+) serves as cofactor.

Its function is as follows. Negatively regulates transcription of bacterial ribonucleotide reductase nrd genes and operons by binding to NrdR-boxes. This is Transcriptional repressor NrdR from Bradyrhizobium sp. (strain BTAi1 / ATCC BAA-1182).